The primary structure comprises 372 residues: Carbamoyl phosphate synthase small chain (372 aa).

Residues 1–179 (MRAILALEDG…ALVTGKTLPP (179 aa)) form a CPSase region. L-glutamine-binding residues include S45, G231, and G233. A Glutamine amidotransferase type-1 domain is found at 183 to 369 (DIVAFDFGIK…RKMIAASKRQ (187 aa)). The active-site Nucleophile is the C258. L-glutamine is bound by residues L259, Q262, N300, G302, and F303. Catalysis depends on residues H342 and E344.

The protein belongs to the CarA family. As to quaternary structure, composed of two chains; the small (or glutamine) chain promotes the hydrolysis of glutamine to ammonia, which is used by the large (or ammonia) chain to synthesize carbamoyl phosphate. Tetramer of heterodimers (alpha,beta)4.

It carries out the reaction hydrogencarbonate + L-glutamine + 2 ATP + H2O = carbamoyl phosphate + L-glutamate + 2 ADP + phosphate + 2 H(+). The enzyme catalyses L-glutamine + H2O = L-glutamate + NH4(+). It participates in amino-acid biosynthesis; L-arginine biosynthesis; carbamoyl phosphate from bicarbonate: step 1/1. The protein operates within pyrimidine metabolism; UMP biosynthesis via de novo pathway; (S)-dihydroorotate from bicarbonate: step 1/3. Its function is as follows. Small subunit of the glutamine-dependent carbamoyl phosphate synthetase (CPSase). CPSase catalyzes the formation of carbamoyl phosphate from the ammonia moiety of glutamine, carbonate, and phosphate donated by ATP, constituting the first step of 2 biosynthetic pathways, one leading to arginine and/or urea and the other to pyrimidine nucleotides. The small subunit (glutamine amidotransferase) binds and cleaves glutamine to supply the large subunit with the substrate ammonia. This Akkermansia muciniphila (strain ATCC BAA-835 / DSM 22959 / JCM 33894 / BCRC 81048 / CCUG 64013 / CIP 107961 / Muc) protein is Carbamoyl phosphate synthase small chain.